Consider the following 66-residue polypeptide: Beta-toxin Cb2 (66 aa).

The 66-residue stretch at 1 to 66 (KEGYLVDLHT…VWPLPNKRCK (66 aa)) folds into the LCN-type CS-alpha/beta domain. Cystine bridges form between cysteine 12/cysteine 65, cysteine 16/cysteine 41, cysteine 25/cysteine 46, and cysteine 29/cysteine 48.

Belongs to the long (4 C-C) scorpion toxin superfamily. Sodium channel inhibitor family. Beta subfamily. Expressed by the venom gland.

Its subcellular location is the secreted. Beta toxins bind voltage-independently at site-4 of sodium channels (Nav) and reduces peak current and shifts the voltage of activation toward more negative potentials thereby affecting sodium channel activation and promoting spontaneous and repetitive firing. Has an inhibitory effect on voltage-gated sodium channel hNav1.6/SCN8A, affecting both the activation and inactivation processes. Also reduces the peak current of hNav1.5/SCN5A but does not shift its voltage of activation. This toxin is active against mammals and lethal to mice. The polypeptide is Beta-toxin Cb2 (Centruroides baergi (Scorpion)).